We begin with the raw amino-acid sequence, 968 residues long: Probable transport protein MmpL2 (968 aa).

11 consecutive transmembrane segments (helical) span residues 22-42, 204-224, 245-265, 297-317, 328-348, 378-398, 763-783, 787-807, 815-835, 866-886, and 890-910; these read FAVVIVLLWLGFTAFVNLAVP, VIAAMLLVIYRSVITAVLVLI, IFSLSTFATNLLVLMAIAAST, AHVILGSGLTIAGAMYCLSFA, PIAIGMLVAVLAALTLGPAVL, WPGPVLAATCLVASIGLLALP, YDLLIAGVAAISLILIIMMII, VVAAVVIVGTVVLSMGASFGL, ILGIELYWMVLAMSVILLLAV, TGGVVTAAGMVFAVTMSLFVF, and RIIGQIGTTIGLGLLFDTLVV.

It belongs to the resistance-nodulation-cell division (RND) (TC 2.A.6) family. MmpL subfamily.

The protein resides in the cell membrane. This chain is Probable transport protein MmpL2 (mmpL2), found in Mycobacterium tuberculosis (strain CDC 1551 / Oshkosh).